A 328-amino-acid polypeptide reads, in one-letter code: uncharacterized protein (328 aa).

The 124-residue stretch at 3–126 folds into the Bro-N domain; it reads RVKIGEFKFG…EVIPQVLCTG (124 aa).

This is an uncharacterized protein from Autographa californica nuclear polyhedrosis virus (AcMNPV).